A 151-amino-acid polypeptide reads, in one-letter code: HTH-type transcriptional regulator FL11 (151 aa).

An HTH asnC-type domain is found at 5–66 (LDEIDKKIIK…IIDPEALGYS (62 aa)). The H-T-H motif DNA-binding region spans 24–43 (LREISKITGLAESTIHERIR). Residue 98 to 104 (ETTGDYD) coordinates L-arginine. L-lysine-binding positions include Asn118, Asp122, and 133-135 (THT). Residues Asp122 and 133-135 (THT) contribute to the L-arginine site.

Homodimer. Binds DNA as a dimer and an octamer. The octamer formed with lysine is stable in solution, but the octamer formed with arginine is unstable without DNA. When crystallized in the absence of DNA, dimers are assembled into helical cylinders with six dimers per turn. In solution, predominantly behaves as a dimer.

In the famine mode, FL11 forms dimers and acts as a repressor, leading to growth arrest. In the feast mode, in the presence of high concentrations of lysine or arginine, four dimers assemble into an octamer and cover the fl11 and lysine biosynthesis promoters. This leads to the inhibition of fl11 expression and lysine biosynthesis, decrease of the FL11 concentration in the cell, derepression of the target genes and activation of the metabolism. DNA-binding protein involved in the repression of transcription of a large number of genes, thereby arresting growth, in response to environmental changes. Binding sites are identified in promoters of approximately 200 transcription units, including genes involved in ATP synthesis, transmembrane transport, translation and DNA synthesis. The protein is HTH-type transcriptional regulator FL11 of Pyrococcus horikoshii (strain ATCC 700860 / DSM 12428 / JCM 9974 / NBRC 100139 / OT-3).